A 124-amino-acid chain; its full sequence is Large ribosomal subunit protein bL12 (124 aa).

The protein belongs to the bacterial ribosomal protein bL12 family. Homodimer. Part of the ribosomal stalk of the 50S ribosomal subunit. Forms a multimeric L10(L12)X complex, where L10 forms an elongated spine to which 2 to 4 L12 dimers bind in a sequential fashion. Binds GTP-bound translation factors.

In terms of biological role, forms part of the ribosomal stalk which helps the ribosome interact with GTP-bound translation factors. Is thus essential for accurate translation. This is Large ribosomal subunit protein bL12 from Dehalococcoides mccartyi (strain ATCC BAA-2266 / KCTC 15142 / 195) (Dehalococcoides ethenogenes (strain 195)).